The primary structure comprises 156 residues: Small ribosomal subunit protein uS7c (156 aa).

The protein belongs to the universal ribosomal protein uS7 family. Part of the 30S ribosomal subunit.

The protein resides in the plastid. It is found in the chloroplast. One of the primary rRNA binding proteins, it binds directly to 16S rRNA where it nucleates assembly of the head domain of the 30S subunit. The sequence is that of Small ribosomal subunit protein uS7c (rps7) from Guillardia theta (Cryptophyte).